Consider the following 264-residue polypeptide: SPRY domain-containing SOCS box protein 2 (264 aa).

A compositionally biased stretch (polar residues) spans 1 to 19 (MGQTALARGSSSTPTSQAL). Residues 1 to 34 (MGQTALARGSSSTPTSQALYSDFSPPEGLEELLS) are disordered. Positions 26-221 (PEGLEELLSA…VRIRYMGERR (196 aa)) constitute a B30.2/SPRY domain. The 43-residue stretch at 222-264 (VEEPQSLLHLSRLCVRHALGDTRLGQISTLPLPPAMKRYLLYK) folds into the SOCS box domain.

It belongs to the SPSB family. Component of the probable ECS(SPSB2) E3 ubiquitin-protein ligase complex which contains CUL5, RNF7/RBX2, Elongin BC complex and SPSB2. Interacts with CUL5, RNF7, ELOB and ELOC. Interacts with MET. Interacts (via B30.2/SPRY domain) with PAWR; this interaction occurs in association with the Elongin BC complex. Interacts with NOS2.

The protein resides in the cytoplasm. It is found in the cytosol. It functions in the pathway protein modification; protein ubiquitination. Substrate recognition component of a SCF-like ECS (Elongin BC-CUL2/5-SOCS-box protein) E3 ubiquitin-protein ligase complex which mediates the ubiquitination and subsequent proteasomal degradation of target proteins. Negatively regulates nitric oxide (NO) production and limits cellular toxicity in activated macrophages by mediating the ubiquitination and proteasomal degradation of NOS2. Acts as a bridge which links NOS2 with the ECS E3 ubiquitin ligase complex components ELOC and CUL5. In Mus musculus (Mouse), this protein is SPRY domain-containing SOCS box protein 2 (Spsb2).